Consider the following 52-residue polypeptide: Rubredoxin-2 (52 aa).

In terms of domain architecture, Rubredoxin-like spans 1-52; that stretch reads MEQWKCNICGYIYNPETGDPEGDIPAGTSFESLPDSWMCPVCGAGKEEFTKI. Positions 6, 9, 39, and 42 each coordinate Fe cation.

It belongs to the rubredoxin family. In terms of assembly, monomer. The cofactor is Fe(3+).

Functionally, serves as an electron acceptor for pyruvate ferredoxin oxidoreductase (PFOR). This Chlorobaculum tepidum (strain ATCC 49652 / DSM 12025 / NBRC 103806 / TLS) (Chlorobium tepidum) protein is Rubredoxin-2 (rub2).